Reading from the N-terminus, the 705-residue chain is p-hydroxybenzoic acid--AMP ligase FadD22 (705 aa).

In terms of domain architecture, Carrier spans 541–619 (ERQRLVVDAV…GLAQYLEAEL (79 aa)). Serine 579 bears the O-(pantetheine 4'-phosphoryl)serine mark.

The protein belongs to the ATP-dependent AMP-binding enzyme family.

The enzyme catalyses holo-[4-hydroxyphenylalkanoate synthase] + 4-hydroxybenzoate + ATP = 4-hydroxyphenyl-[4-hydroxyphenylalkanoate synthase] + AMP + diphosphate. It participates in lipid metabolism; fatty acid biosynthesis. Its function is as follows. Catalyzes the adenylation of p-hydroxybenzoic acid (pHBA) to form p-hydroxybenzoic acid-AMP (pHBA-AMP), which is converted directly to p-hydroxybenzoyl-S-FadD22 (pHBA-S-FAdD22) thioester intermediate in a CoA-independent manner by attack of the phosphopantetheine thiol of FadD22. Usually, this intermediate primes the biosynthesis of the phenolphthiocerol (PPOL) by presenting the pHBA starter unit for elongation by Pks15/1, but M.tuberculosis lacks Pks15/1 due to a natural frameshift and thus is unable to produce PPOL. In Mycobacterium tuberculosis (strain CDC 1551 / Oshkosh), this protein is p-hydroxybenzoic acid--AMP ligase FadD22 (fadD22).